Here is a 424-residue protein sequence, read N- to C-terminus: NADH-quinone oxidoreductase subunit H (424 aa).

9 helical membrane passes run Leu11 to Ile31, Phe79 to Ile99, Leu119 to Leu139, Val160 to Ser180, Val193 to Glu213, Val255 to Leu275, Trp283 to Leu303, Ala317 to Ile337, and Tyr347 to Leu367. Residues Ala376–Gly424 are disordered.

Belongs to the complex I subunit 1 family. As to quaternary structure, NDH-1 is composed of 14 different subunits. Subunits NuoA, H, J, K, L, M, N constitute the membrane sector of the complex.

The protein localises to the cell membrane. The enzyme catalyses a quinone + NADH + 5 H(+)(in) = a quinol + NAD(+) + 4 H(+)(out). Functionally, NDH-1 shuttles electrons from NADH, via FMN and iron-sulfur (Fe-S) centers, to quinones in the respiratory chain. The immediate electron acceptor for the enzyme in this species is believed to be menaquinone. Couples the redox reaction to proton translocation (for every two electrons transferred, four hydrogen ions are translocated across the cytoplasmic membrane), and thus conserves the redox energy in a proton gradient. This subunit may bind ubiquinone. The polypeptide is NADH-quinone oxidoreductase subunit H (Mycobacterium ulcerans (strain Agy99)).